The following is a 181-amino-acid chain: ATP-dependent protease subunit HslV (181 aa).

Residue threonine 5 is part of the active site. Alanine 161, cysteine 164, and threonine 167 together coordinate Na(+).

It belongs to the peptidase T1B family. HslV subfamily. As to quaternary structure, a double ring-shaped homohexamer of HslV is capped on each side by a ring-shaped HslU homohexamer. The assembly of the HslU/HslV complex is dependent on binding of ATP.

It localises to the cytoplasm. The catalysed reaction is ATP-dependent cleavage of peptide bonds with broad specificity.. With respect to regulation, allosterically activated by HslU binding. Protease subunit of a proteasome-like degradation complex believed to be a general protein degrading machinery. In Sulfurimonas denitrificans (strain ATCC 33889 / DSM 1251) (Thiomicrospira denitrificans (strain ATCC 33889 / DSM 1251)), this protein is ATP-dependent protease subunit HslV.